Here is a 153-residue protein sequence, read N- to C-terminus: ATP synthase subunit b' (153 aa).

A helical transmembrane segment spans residues 23–40; sequence LMAIQVVALTYILNSLFF.

Belongs to the ATPase B chain family. In terms of assembly, F-type ATPases have 2 components, F(1) - the catalytic core - and F(0) - the membrane proton channel. F(1) has five subunits: alpha(3), beta(3), gamma(1), delta(1), epsilon(1). F(0) has four main subunits: a(1), b(1), b'(1) and c(10-14). The alpha and beta chains form an alternating ring which encloses part of the gamma chain. F(1) is attached to F(0) by a central stalk formed by the gamma and epsilon chains, while a peripheral stalk is formed by the delta, b and b' chains.

The protein localises to the cellular thylakoid membrane. Functionally, f(1)F(0) ATP synthase produces ATP from ADP in the presence of a proton or sodium gradient. F-type ATPases consist of two structural domains, F(1) containing the extramembraneous catalytic core and F(0) containing the membrane proton channel, linked together by a central stalk and a peripheral stalk. During catalysis, ATP synthesis in the catalytic domain of F(1) is coupled via a rotary mechanism of the central stalk subunits to proton translocation. Its function is as follows. Component of the F(0) channel, it forms part of the peripheral stalk, linking F(1) to F(0). The b'-subunit is a diverged and duplicated form of b found in plants and photosynthetic bacteria. This Prochlorococcus marinus (strain AS9601) protein is ATP synthase subunit b'.